A 1165-amino-acid chain; its full sequence is uncharacterized protein (1165 aa).

The segment at 422–442 (EAAPPRPPRKSKAPEPTGDKA) is disordered.

This is an uncharacterized protein from Frog virus 3 (isolate Goorha) (FV-3).